The sequence spans 201 residues: Mediator of RNA polymerase II transcription subunit 22 (201 aa).

A coiled-coil region spans residues 93 to 123 (SVNESINQRNQQLRTLREECDKKLIALRDDI). A disordered region spans residues 182 to 201 (SQIHTPPHLNGHGAGMTEHT).

The protein belongs to the Mediator complex subunit 22 family. As to quaternary structure, component of the Mediator complex.

The protein localises to the nucleus. Its function is as follows. Component of the Mediator complex, a coactivator involved in the regulated transcription of nearly all RNA polymerase II-dependent genes. Mediator functions as a bridge to convey information from gene-specific regulatory proteins to the basal RNA polymerase II transcription machinery. Mediator is recruited to promoters by direct interactions with regulatory proteins and serves as a scaffold for the assembly of a functional preinitiation complex with RNA polymerase II and the general transcription factors. The sequence is that of Mediator of RNA polymerase II transcription subunit 22 (med22) from Xenopus laevis (African clawed frog).